We begin with the raw amino-acid sequence, 211 residues long: B3 domain-containing protein At5g42700 (211 aa).

A DNA-binding region (TF-B3) is located at residues 110-201 (FVKSMLQSHV…AFKVYITRVG (92 aa)).

The protein localises to the nucleus. This is B3 domain-containing protein At5g42700 from Arabidopsis thaliana (Mouse-ear cress).